The sequence spans 356 residues: Peptide chain release factor 1 (356 aa).

Gln-233 carries the post-translational modification N5-methylglutamine.

It belongs to the prokaryotic/mitochondrial release factor family. Methylated by PrmC. Methylation increases the termination efficiency of RF1.

It localises to the cytoplasm. In terms of biological role, peptide chain release factor 1 directs the termination of translation in response to the peptide chain termination codons UAG and UAA. This Endomicrobium trichonymphae protein is Peptide chain release factor 1.